A 121-amino-acid polypeptide reads, in one-letter code: Large ribosomal subunit protein uL18 (121 aa).

Belongs to the universal ribosomal protein uL18 family. Part of the 50S ribosomal subunit; part of the 5S rRNA/L5/L18/L25 subcomplex. Contacts the 5S and 23S rRNAs.

In terms of biological role, this is one of the proteins that bind and probably mediate the attachment of the 5S RNA into the large ribosomal subunit, where it forms part of the central protuberance. In Paraburkholderia phymatum (strain DSM 17167 / CIP 108236 / LMG 21445 / STM815) (Burkholderia phymatum), this protein is Large ribosomal subunit protein uL18.